The sequence spans 152 residues: UPF0756 membrane protein Moth_1009 (152 aa).

The next 4 helical transmembrane spans lie at 5–25, 41–61, 75–95, and 117–137; these read LIIL…VALA, IFPF…IAAI, LGHV…LITT, and LILG…GPFI.

It belongs to the UPF0756 family.

Its subcellular location is the cell membrane. The protein is UPF0756 membrane protein Moth_1009 of Moorella thermoacetica (strain ATCC 39073 / JCM 9320).